We begin with the raw amino-acid sequence, 376 residues long: uncharacterized protein (376 aa).

It belongs to the mimivirus L17x/L18x family.

This is an uncharacterized protein from Acanthamoeba polyphaga (Amoeba).